Consider the following 1012-residue polypeptide: Cellulose synthase-like protein D5 (1012 aa).

Residues 1–81 (MSVDYANYTV…ARVPAPSSNK (81 aa)) are disordered. A compositionally biased stretch (low complexity) spans 20–37 (PSGGAPPAAPSAGGARPG). Over residues 57–69 (GGGDDGAKMDRRL) the composition is skewed to basic and acidic residues. The next 2 membrane-spanning stretches (helical) occupy residues 150 to 170 (ILSP…LFLV) and 180 to 200 (ALWL…SWLL). Asp-280 is a catalytic residue. The disordered stretch occupies residues 597-620 (PRQGSEAMPGAGGGRSGGGSVGGD). A compositionally biased stretch (gly residues) spans 606–618 (GAGGGRSGGGSVG). Asp-717 is an active-site residue. The next 6 membrane-spanning stretches (helical) occupy residues 799–819 (LFLI…QFIV), 825–845 (TFLS…LLEV), 871–891 (LAAV…SFTL), 914–934 (SLFI…VVGV), 948–968 (LLGG…FAKG), and 978–998 (TIVY…WITI).

This sequence belongs to the glycosyltransferase 2 family. Plant cellulose synthase-like D subfamily.

The protein resides in the golgi apparatus membrane. In terms of biological role, thought to be a Golgi-localized beta-glycan synthase that polymerize the backbones of noncellulosic polysaccharides (hemicelluloses) of plant cell wall. This is Cellulose synthase-like protein D5 (CSLD5) from Oryza sativa subsp. japonica (Rice).